Consider the following 277-residue polypeptide: Large ribosomal subunit protein uL2 (277 aa).

Residues V223 to K277 form a disordered region.

This sequence belongs to the universal ribosomal protein uL2 family. As to quaternary structure, part of the 50S ribosomal subunit. Forms a bridge to the 30S subunit in the 70S ribosome.

Functionally, one of the primary rRNA binding proteins. Required for association of the 30S and 50S subunits to form the 70S ribosome, for tRNA binding and peptide bond formation. It has been suggested to have peptidyltransferase activity; this is somewhat controversial. Makes several contacts with the 16S rRNA in the 70S ribosome. The sequence is that of Large ribosomal subunit protein uL2 from Azorhizobium caulinodans (strain ATCC 43989 / DSM 5975 / JCM 20966 / LMG 6465 / NBRC 14845 / NCIMB 13405 / ORS 571).